Here is a 75-residue protein sequence, read N- to C-terminus: UPF0352 protein ETA_12580 (75 aa).

It belongs to the UPF0352 family.

This Erwinia tasmaniensis (strain DSM 17950 / CFBP 7177 / CIP 109463 / NCPPB 4357 / Et1/99) protein is UPF0352 protein ETA_12580.